The chain runs to 305 residues: Glycine--tRNA ligase alpha subunit (305 aa).

This sequence belongs to the class-II aminoacyl-tRNA synthetase family. In terms of assembly, tetramer of two alpha and two beta subunits.

It is found in the cytoplasm. The enzyme catalyses tRNA(Gly) + glycine + ATP = glycyl-tRNA(Gly) + AMP + diphosphate. This chain is Glycine--tRNA ligase alpha subunit, found in Streptococcus pneumoniae (strain ATCC BAA-255 / R6).